The chain runs to 234 residues: Segregation and condensation protein A (234 aa).

This sequence belongs to the ScpA family. Component of a cohesin-like complex composed of ScpA, ScpB and the Smc homodimer, in which ScpA and ScpB bind to the head domain of Smc. The presence of the three proteins is required for the association of the complex with DNA.

It localises to the cytoplasm. Functionally, participates in chromosomal partition during cell division. May act via the formation of a condensin-like complex containing Smc and ScpB that pull DNA away from mid-cell into both cell halves. This is Segregation and condensation protein A from Streptococcus pyogenes serotype M3 (strain ATCC BAA-595 / MGAS315).